Reading from the N-terminus, the 416-residue chain is Chromate transport protein (416 aa).

The interval 1 to 21 (MSVANEESYRPSKATDATTEA) is disordered. The next 11 helical transmembrane spans lie at 99 to 119 (LGGV…MFAL), 128 to 148 (FVGT…IALI), 160 to 177 (LLDR…LAAI), 181 to 198 (DFWI…LLVL), 204 to 224 (ALLV…WAAP), 237 to 257 (ASVL…FGGA), 283 to 303 (LALS…VGYV), 308 to 328 (IGAV…SLIF), 341 to 361 (LHAF…ATTI), 371 to 391 (VPSL…LYAW), and 395 to 415 (LNVV…FPNQ).

It belongs to the chromate ion transporter (CHR) (TC 2.A.51) family.

The protein localises to the cell inner membrane. In terms of biological role, this protein reduces chromate accumulation and is essential for chromate resistance. This chain is Chromate transport protein, found in Pseudomonas aeruginosa.